Consider the following 471-residue polypeptide: Proline--tRNA ligase 2 (471 aa).

The protein belongs to the class-II aminoacyl-tRNA synthetase family. ProS type 3 subfamily. Homodimer.

Its subcellular location is the cytoplasm. The catalysed reaction is tRNA(Pro) + L-proline + ATP = L-prolyl-tRNA(Pro) + AMP + diphosphate. Its function is as follows. Catalyzes the attachment of proline to tRNA(Pro) in a two-step reaction: proline is first activated by ATP to form Pro-AMP and then transferred to the acceptor end of tRNA(Pro). This Streptomyces avermitilis (strain ATCC 31267 / DSM 46492 / JCM 5070 / NBRC 14893 / NCIMB 12804 / NRRL 8165 / MA-4680) protein is Proline--tRNA ligase 2.